The following is a 58-amino-acid chain: Glutathione reductase (58 aa).

The FAD site is built by E5, T12, C13, and K21. C13 and C18 are disulfide-bonded.

This sequence belongs to the class-I pyridine nucleotide-disulfide oxidoreductase family. As to quaternary structure, homodimer. The cofactor is FAD.

It is found in the cytoplasm. The enzyme catalyses 2 glutathione + NADP(+) = glutathione disulfide + NADPH + H(+). Its function is as follows. Catalyzes the reduction of glutathione disulfide (GSSG) to reduced glutathione (GSH). Constitutes the major mechanism to maintain a high GSH:GSSG ratio in the cytosol. The sequence is that of Glutathione reductase from Spirulina sp.